The primary structure comprises 337 residues: Eukaryotic translation initiation factor 3 subunit I (337 aa).

WD repeat units follow at residues 8-47, 50-91, 147-186, 191-230, and 288-327; these read GHERSLNQIKFNRDGDLIFSVAKDKIVCAWWSANGERLGT, GHQG…KVWD, CTESKATVAGWSYMGKYIIAGHEDGSVSQYDGKTGEQLEN, EFDHQINDIQFSADRTYFITASKDKSAKLMSTRNLAILKT, and GHFGPLNTVHIHPAGTAYASGGEDGYVRVHHFDKPYFDFM.

The protein belongs to the eIF-3 subunit I family. As to quaternary structure, component of the eukaryotic translation initiation factor 3 (eIF-3) complex.

Its subcellular location is the cytoplasm. In terms of biological role, component of the eukaryotic translation initiation factor 3 (eIF-3) complex, which is involved in protein synthesis of a specialized repertoire of mRNAs and, together with other initiation factors, stimulates binding of mRNA and methionyl-tRNAi to the 40S ribosome. The eIF-3 complex specifically targets and initiates translation of a subset of mRNAs involved in cell proliferation. In Aspergillus niger (strain ATCC MYA-4892 / CBS 513.88 / FGSC A1513), this protein is Eukaryotic translation initiation factor 3 subunit I (tif34).